Consider the following 219-residue polypeptide: Transmembrane emp24 domain-containing protein 10 (219 aa).

An N-terminal signal peptide occupies residues 1–31; sequence MSGSSGPLSWPGPRPCALLFLLLLGPSSVLA. The required for interaction with STX17 stretch occupies residues 1-142; that stretch reads MSGSSGPLSW…KNYEEIAKVE (142 aa). Residues 32 to 185 lie on the Lumenal side of the membrane; it reads ISFHLPVNSR…RDTNESTNTR (154 aa). A GOLD domain is found at 41–193; it reads RKCLREEIHK…TRVLYFSIFS (153 aa). Residues 147–178 are required for TMED10 and TMED2 cis-Golgi network localization; sequence LEVELRRLEDLSESIVNDFAYMKKREEEMRDT. 2 positions are modified to dimethylated arginine: R171 and R176. Residue N179 is glycosylated (N-linked (GlcNAc...) asparagine). Residues 186 to 206 form a helical membrane-spanning segment; that stretch reads VLYFSIFSMLCLIGLATWQVF. Residues 204–219 are interaction with COPG1; it reads QVFYLRRFFKAKKLIE. Over 207-219 the chain is Cytoplasmic; the sequence is YLRRFFKAKKLIE. The segment at 207-219 is interaction with ARF1 and IL1B; it reads YLRRFFKAKKLIE. The short motif at 211–212 is the COPII vesicle coat-binding element; it reads FF. A COPI vesicle coat-binding motif is present at residues 211–219; the sequence is FFKAKKLIE.

Belongs to the EMP24/GP25L family. As to quaternary structure, predominantly dimeric and to a lesser extent monomeric in the ER. Monomer and dimer in ERGIC and cis-Golgi network. Forms homooligomer (via GOLD domain); the assembly is promoted by direct binding with leaderless cargos and may form a protein channel that facilitates cargo entry into the ERGIC. Forms heterooligomeric complexes with other members of the p24 family such as TMED2, TMED7 and TMED9. Interacts (via GOLD domain) with TMED2 (via GOLD domain); the complex is required for export of TMED10 from the ER to the cis-Golgi network; the complex is proposed to be involved in cis-Golgi network dynamics and / or biogenesis. Associates with the COPI vesicle coat subunits (coatomer). Tetramerization of the cytoplasmic domain at the Golgi membrane in vitro; the complex is proposed to interact with COPI coatomer and induce budding of the vesicles. Interacts with COPG1; the interaction involves TMED10 homodimer. Interacts with ARF1 (GDP-bound); the interaction probably involves a TMED10 oligomer. Interacts with SEC23A, SEC24B, SEC24C and SEC24D components of the coat protein complex II/COPII, indicative of an association of TMED10 with the COPII vesicle coat. Interacts with CD59. Interacts with MPPE1/PGAP5; the complex might recruit and sort GPI-anchored proteins to the ER-exit site, or the interaction might lead to recycling of PGAP5 between the ER and the Golgi. Interacts with F2LR1/PAR2. Interacts with KDELR2/ERD2; the interaction is disrupted by KDELR2 ligand. Found in a complex composed at least of SURF4, TMED2 and TMED10. Associates with the presenilin-dependent gamma-secretase complex. Interacts with STX17; the interaction is direct. Interacts with IL-1; the interaction is direct. Interacts with RAB21 (active GTP-bound form); the interaction is indirect and regulates TMED10 abundance and localization at the Golgi.

It is found in the endoplasmic reticulum membrane. The protein localises to the endoplasmic reticulum-Golgi intermediate compartment membrane. It localises to the golgi apparatus membrane. Its subcellular location is the golgi apparatus. The protein resides in the cis-Golgi network membrane. It is found in the trans-Golgi network membrane. The protein localises to the cytoplasmic vesicle. It localises to the secretory vesicle membrane. Its subcellular location is the cell membrane. The protein resides in the melanosome. Its function is as follows. Cargo receptor involved in protein vesicular trafficking and quality control in the endoplasmic reticulum (ER) and Golgi. The p24 protein family is a group of transmembrane proteins that bind coat protein complex I/COPI and coat protein complex II/COPII involved in vesicular trafficking between the membranes. Acts at the lumenal side for incorporation of secretory cargo molecules into transport vesicles and involved in vesicle coat formation at the cytoplasmic side. Mainly functions in the early secretory pathway and cycles between the ER, ER-Golgi intermediate compartment (ERGIC) and Golgi, mediating cargo transport through COPI and COPII-coated vesicles. In COPII vesicle-mediated anterograde transport, involved in the transport of GPI-anchored proteins by acting together with TMED2 as their cargo receptor; the function specifically implies SEC24C and SEC24D of the COPII vesicle coat and lipid raft-like microdomains of the ER. Recognizes GPI anchors structural remodeled in the ER by the GPI inositol-deacylase/PGAP1 and the metallophosphoesterase MPPE1/PGAP5. In COPI vesicle-mediated retrograde transport, involved in the biogenesis of COPI vesicles and vesicle coat recruitment. Involved in trafficking of amyloid beta A4 protein and soluble APP-beta release (independent from the modulation of gamma-secretase activity). Involved in the KDELR2-mediated retrograde transport of the toxin A subunit (CTX-A-K63)together with COPI and the COOH terminus of KDELR2. On Golgi membranes, acts as a primary receptor for ARF1-GDP, a GTP-binding protein involved in COPI-vesicle formation. Increases coatomer-dependent GTPase-activating activity of ARFGAP2 which mediates the hydrolysis of ARF1-bound GTP and therefore modulates protein trafficking from the Golgi apparatus. Involved in the exocytic trafficking of G protein-coupled receptors F2LR1/PAR2 (trypsin and tryspin-like enzyme receptor), OPRM1 (opioid receptor) and P2RY4 (UTD and UDP receptor) from the Golgi to the plasma membrane, thus contributing to receptor resensitization. In addition to its cargo receptor activity, may also act as a protein channel after oligomerization, facilitating the post-translational entry of leaderless cytoplasmic cargo into the ERGIC. Involved in the translocation into ERGIC, the vesicle entry and the secretion of leaderless cargos (lacking the secretion signal sequence), including the mature form of interleukin 1/IL-1 family members, the alpha-crystallin B chain HSPB5, the carbohydrate-binding proteins galectin-1/LGALS1 and galectin-3/LGALS3, the microtubule-associated protein Tau/MAPT, and the annexin A1/ANXA1; the translocation process is dependent on cargo protein unfolding and enhanced by chaperones HSP90AB1 and HSP90B1/GRP9. Could also associates with the presenilin-dependent gamma-secretase complex in order to regulate gamma-cleavages of the amyloid beta A4 protein to yield amyloid-beta 40/Abeta40. This chain is Transmembrane emp24 domain-containing protein 10 (TMED10), found in Mesocricetus auratus (Golden hamster).